We begin with the raw amino-acid sequence, 272 residues long: Dermonecrotic toxin LvSicTox-alphaIC1bv (272 aa).

Residue H5 is part of the active site. 2 residues coordinate Mg(2+): E25 and D27. H41 acts as the Nucleophile in catalysis. 2 cysteine pairs are disulfide-bonded: C45-C51 and C47-C189. D84 serves as a coordination point for Mg(2+).

This sequence belongs to the arthropod phospholipase D family. Class II subfamily. Mg(2+) serves as cofactor. Expressed by the venom gland.

Its subcellular location is the secreted. The catalysed reaction is an N-(acyl)-sphingosylphosphocholine = an N-(acyl)-sphingosyl-1,3-cyclic phosphate + choline. The enzyme catalyses an N-(acyl)-sphingosylphosphoethanolamine = an N-(acyl)-sphingosyl-1,3-cyclic phosphate + ethanolamine. It carries out the reaction a 1-acyl-sn-glycero-3-phosphocholine = a 1-acyl-sn-glycero-2,3-cyclic phosphate + choline. It catalyses the reaction a 1-acyl-sn-glycero-3-phosphoethanolamine = a 1-acyl-sn-glycero-2,3-cyclic phosphate + ethanolamine. In terms of biological role, dermonecrotic toxins cleave the phosphodiester linkage between the phosphate and headgroup of certain phospholipids (sphingolipid and lysolipid substrates), forming an alcohol (often choline) and a cyclic phosphate. This toxin acts on sphingomyelin (SM). It may also act on ceramide phosphoethanolamine (CPE), lysophosphatidylcholine (LPC) and lysophosphatidylethanolamine (LPE), but not on lysophosphatidylserine (LPS), and lysophosphatidylglycerol (LPG). It acts by transphosphatidylation, releasing exclusively cyclic phosphate products as second products. Induces dermonecrosis, hemolysis, increased vascular permeability, edema, inflammatory response, and platelet aggregation. The polypeptide is Dermonecrotic toxin LvSicTox-alphaIC1bv (Loxosceles variegata (Recluse spider)).